Here is a 374-residue protein sequence, read N- to C-terminus: Glutamate 5-kinase (374 aa).

Residue K17 coordinates ATP. Substrate is bound by residues S57, D144, and N156. Residues 176 to 177 and 218 to 224 each bind ATP; these read SD and TGGMVTK. One can recognise a PUA domain in the interval 280 to 358; the sequence is QGALVLDDGA…RELARELGPA (79 aa).

This sequence belongs to the glutamate 5-kinase family.

It is found in the cytoplasm. The catalysed reaction is L-glutamate + ATP = L-glutamyl 5-phosphate + ADP. It participates in amino-acid biosynthesis; L-proline biosynthesis; L-glutamate 5-semialdehyde from L-glutamate: step 1/2. In terms of biological role, catalyzes the transfer of a phosphate group to glutamate to form L-glutamate 5-phosphate. The protein is Glutamate 5-kinase of Streptomyces coelicolor (strain ATCC BAA-471 / A3(2) / M145).